We begin with the raw amino-acid sequence, 637 residues long: DNA mismatch repair protein MutL (637 aa).

2 disordered regions span residues 352–384 (DDFT…NVLF) and 405–430 (ASVE…AMEQ).

The protein belongs to the DNA mismatch repair MutL/HexB family.

In terms of biological role, this protein is involved in the repair of mismatches in DNA. It is required for dam-dependent methyl-directed DNA mismatch repair. May act as a 'molecular matchmaker', a protein that promotes the formation of a stable complex between two or more DNA-binding proteins in an ATP-dependent manner without itself being part of a final effector complex. The polypeptide is DNA mismatch repair protein MutL (Halalkalibacterium halodurans (strain ATCC BAA-125 / DSM 18197 / FERM 7344 / JCM 9153 / C-125) (Bacillus halodurans)).